A 137-amino-acid chain; its full sequence is Large ribosomal subunit protein uL16 (137 aa).

Belongs to the universal ribosomal protein uL16 family. As to quaternary structure, part of the 50S ribosomal subunit.

Binds 23S rRNA and is also seen to make contacts with the A and possibly P site tRNAs. This is Large ribosomal subunit protein uL16 from Mesoplasma florum (strain ATCC 33453 / NBRC 100688 / NCTC 11704 / L1) (Acholeplasma florum).